Reading from the N-terminus, the 167-residue chain is MAHIEKQAGELQEKLIAVNRVSKTVKGGRIFSFTALTVVGDGNGRVGFGYGKAREVPAAIQKAMEKARRAMINVALNSGTLQHPVKGAHTGSRVFMQPASEGTGIIAGGAMRAVLEVAGVHNVLAKAYGSTNPINVVRATIAALEDMKSPEMVAAKRGKSVEEILGK.

One can recognise an S5 DRBM domain in the interval 11–74 (LQEKLIAVNR…EKARRAMINV (64 aa)).

Belongs to the universal ribosomal protein uS5 family. In terms of assembly, part of the 30S ribosomal subunit. Contacts proteins S4 and S8.

Functionally, with S4 and S12 plays an important role in translational accuracy. Located at the back of the 30S subunit body where it stabilizes the conformation of the head with respect to the body. In Serratia proteamaculans (strain 568), this protein is Small ribosomal subunit protein uS5.